The primary structure comprises 216 residues: Probable methylthioribulose-1-phosphate dehydratase (216 aa).

Cys87 contacts substrate. 2 residues coordinate Zn(2+): His105 and His107. The active-site Proton donor/acceptor is Glu129.

The protein belongs to the aldolase class II family. MtnB subfamily. Zn(2+) serves as cofactor.

It localises to the cytoplasm. It carries out the reaction 5-(methylsulfanyl)-D-ribulose 1-phosphate = 5-methylsulfanyl-2,3-dioxopentyl phosphate + H2O. It functions in the pathway amino-acid biosynthesis; L-methionine biosynthesis via salvage pathway; L-methionine from S-methyl-5-thio-alpha-D-ribose 1-phosphate: step 2/6. Catalyzes the dehydration of methylthioribulose-1-phosphate (MTRu-1-P) into 2,3-diketo-5-methylthiopentyl-1-phosphate (DK-MTP-1-P). In Drosophila persimilis (Fruit fly), this protein is Probable methylthioribulose-1-phosphate dehydratase.